The primary structure comprises 376 residues: uncharacterized protein (376 aa).

Composition is skewed to low complexity over residues 73–99 and 228–243; these read NNSI…NNNN and SSFS…TVSS. Disordered regions lie at residues 73–100 and 222–269; these read NNSI…NNNL and EQDP…KISD.

This is an uncharacterized protein from Saccharomyces cerevisiae (strain ATCC 204508 / S288c) (Baker's yeast).